The following is a 125-amino-acid chain: Small ribosomal subunit protein uS12m (125 aa).

The segment at 1–24 (MPTSNQSIRHGREKKRRTDRTRAL) is disordered. Residues 9-19 (RHGREKKRRTD) are compositionally biased toward basic residues.

Belongs to the universal ribosomal protein uS12 family.

It localises to the mitochondrion. Protein S12 is involved in the translation initiation step. The sequence is that of Small ribosomal subunit protein uS12m (RPS12) from Pinus sylvestris (Scotch pine).